The following is a 184-amino-acid chain: Protein GrpE (184 aa).

Residues 1–24 (MADEQLDEKNLNSEEAGAVNGDAR) are disordered.

Belongs to the GrpE family. Homodimer.

It is found in the cytoplasm. Its function is as follows. Participates actively in the response to hyperosmotic and heat shock by preventing the aggregation of stress-denatured proteins, in association with DnaK and GrpE. It is the nucleotide exchange factor for DnaK and may function as a thermosensor. Unfolded proteins bind initially to DnaJ; upon interaction with the DnaJ-bound protein, DnaK hydrolyzes its bound ATP, resulting in the formation of a stable complex. GrpE releases ADP from DnaK; ATP binding to DnaK triggers the release of the substrate protein, thus completing the reaction cycle. Several rounds of ATP-dependent interactions between DnaJ, DnaK and GrpE are required for fully efficient folding. The sequence is that of Protein GrpE from Pseudomonas entomophila (strain L48).